Consider the following 407-residue polypeptide: Argininosuccinate synthase (407 aa).

ATP-binding positions include 13-21 (AYSGGLDTS) and Ala40. Positions 91 and 96 each coordinate L-citrulline. Residue Gly121 participates in ATP binding. 3 residues coordinate L-aspartate: Thr123, Asn127, and Asp128. Asn127 contacts L-citrulline. L-citrulline is bound by residues Arg131, Ser182, Ser191, Glu267, and Tyr279.

The protein belongs to the argininosuccinate synthase family. Type 1 subfamily. Homotetramer.

It is found in the cytoplasm. It carries out the reaction L-citrulline + L-aspartate + ATP = 2-(N(omega)-L-arginino)succinate + AMP + diphosphate + H(+). It participates in amino-acid biosynthesis; L-arginine biosynthesis; L-arginine from L-ornithine and carbamoyl phosphate: step 2/3. The sequence is that of Argininosuccinate synthase from Rhizobium etli (strain ATCC 51251 / DSM 11541 / JCM 21823 / NBRC 15573 / CFN 42).